Reading from the N-terminus, the 535-residue chain is Beta-amylase 1, chloroplastic (535 aa).

The transit peptide at 1–36 (MALNLAQSAAAAACFATAGDARRAASVVAMPSSSSS) directs the protein to the chloroplast. Substrate is bound by residues Asp-115, His-155, and Asp-163. Glu-247 serves as the catalytic Proton donor. Residues Lys-361, His-366, and Thr-408 each coordinate substrate. The active-site Proton acceptor is Glu-446. Residues 447-448 (NA) and Arg-480 each bind substrate.

The protein belongs to the glycosyl hydrolase 14 family.

The protein resides in the plastid. It localises to the chloroplast. The enzyme catalyses Hydrolysis of (1-&gt;4)-alpha-D-glucosidic linkages in polysaccharides so as to remove successive maltose units from the non-reducing ends of the chains.. Possesses beta-amylase activity in vitro. May be involved in cold resistance by mediating the accumulation of maltose upon freezing stress, thus contributing to the protection of membranes. This Oryza sativa subsp. japonica (Rice) protein is Beta-amylase 1, chloroplastic.